Reading from the N-terminus, the 552-residue chain is Dihydroxy-acid dehydratase (552 aa).

Aspartate 78 lines the Mg(2+) pocket. Cysteine 119 is a [2Fe-2S] cluster binding site. Aspartate 120 and lysine 121 together coordinate Mg(2+). An N6-carboxylysine modification is found at lysine 121. Cysteine 191 provides a ligand contact to [2Fe-2S] cluster. Mg(2+) is bound at residue glutamate 442. Serine 468 functions as the Proton acceptor in the catalytic mechanism.

It belongs to the IlvD/Edd family. Homodimer. Requires [2Fe-2S] cluster as cofactor. Mg(2+) serves as cofactor.

It catalyses the reaction (2R)-2,3-dihydroxy-3-methylbutanoate = 3-methyl-2-oxobutanoate + H2O. It carries out the reaction (2R,3R)-2,3-dihydroxy-3-methylpentanoate = (S)-3-methyl-2-oxopentanoate + H2O. It participates in amino-acid biosynthesis; L-isoleucine biosynthesis; L-isoleucine from 2-oxobutanoate: step 3/4. The protein operates within amino-acid biosynthesis; L-valine biosynthesis; L-valine from pyruvate: step 3/4. Its function is as follows. Functions in the biosynthesis of branched-chain amino acids. Catalyzes the dehydration of (2R,3R)-2,3-dihydroxy-3-methylpentanoate (2,3-dihydroxy-3-methylvalerate) into 2-oxo-3-methylpentanoate (2-oxo-3-methylvalerate) and of (2R)-2,3-dihydroxy-3-methylbutanoate (2,3-dihydroxyisovalerate) into 2-oxo-3-methylbutanoate (2-oxoisovalerate), the penultimate precursor to L-isoleucine and L-valine, respectively. This chain is Dihydroxy-acid dehydratase, found in Caldicellulosiruptor saccharolyticus (strain ATCC 43494 / DSM 8903 / Tp8T 6331).